The following is a 457-amino-acid chain: Na(+)/H(+) antiporter NhaA (457 aa).

11 helical membrane-spanning segments follow: residues 33-53 (ASGI…NSPL), 76-96 (FSLA…VVGM), 114-134 (LLPL…FLAF), 142-162 (AGWG…LTLL), 172-192 (VFVT…IALF), 196-216 (GLQL…ALMS), 235-255 (YALH…GLAI), 308-328 (FVHA…ALAN), 349-369 (TALA…WIAV), 385-405 (LIGV…IAGL), and 419-439 (VGIL…LRLT).

Belongs to the NhaA Na(+)/H(+) (TC 2.A.33) antiporter family.

Its subcellular location is the cell inner membrane. It catalyses the reaction Na(+)(in) + 2 H(+)(out) = Na(+)(out) + 2 H(+)(in). Functionally, na(+)/H(+) antiporter that extrudes sodium in exchange for external protons. This Anaeromyxobacter sp. (strain Fw109-5) protein is Na(+)/H(+) antiporter NhaA.